A 610-amino-acid chain; its full sequence is MEEDEGADDGEQEEEEVLLVNVGSTYPCKRSDGSQHDADIVKTRYNKQAGREEYYVHYVGLNRRQNEWVDKSRLVLTKPPKEVETNGTDQEEMTEPTEQPDSKTPQKRKLEEPEPEPKKAKVEDKDASKTAASLGAAGDFAEELTCPLCVELFKDPVMVACGHNFCRSCIDKVWEGQSSFACPECKESITDRKYTINRVLANLAKKAACTPVTPVEKKTRPLEKCSEHDERLKLYCKDDGTLGCVICRDSLKHASHNFLPILDAIGVYREELSAIVAPLEASLKVTEQLSGEQSDKIEQHNKNVSQYKEHVTSEFEKLHKFLKEREEKLLEQLKEQGDNLLTEMENNLVKMQENQDAIKKTISLAKERMEETDSISFLTDIKTFIDKCQEQQRAVISTGNTLLSKELCQGTFKGPIQYIMWKELKSVITPSLTPMLLDPNSAHPNLHLSDGLTSVRYGENKLSLPDNPKRFSQCILVLGSQGFDSGRHYWEVEVGDKTAWDVGMASESSNRKGKIKLNPKNGYWAIWLRNGNRYKALESPSKALSLTSHPRKIGVYVDYEGGQISFYNADNMTIIYTFSATFTEKLYPYLSPFLHDSGKNVDALRFVHNQ.

The Tudor-knot domain maps to 21–75; that stretch reads NVGSTYPCKRSDGSQHDADIVKTRYNKQAGREEYYVHYVGLNRRQNEWVDKSRLV. Positions 79–127 are disordered; the sequence is PPKEVETNGTDQEEMTEPTEQPDSKTPQKRKLEEPEPEPKKAKVEDKDA. Position 104 is a phosphothreonine; by CDK1 (Thr104). Positions 108-127 are enriched in basic and acidic residues; the sequence is RKLEEPEPEPKKAKVEDKDA. The segment at 146–186 adopts an RING-type zinc-finger fold; that stretch reads CPLCVELFKDPVMVACGHNFCRSCIDKVWEGQSSFACPECK. A B box-type zinc finger spans residues 220-261; it reads RPLEKCSEHDERLKLYCKDDGTLGCVICRDSLKHASHNFLPI. Zn(2+) contacts are provided by Cys225, His228, Cys247, and His253. Positions 295–374 form a coiled coil; it reads DKIEQHNKNV…AKERMEETDS (80 aa). Positions 415-610 constitute a B30.2/SPRY domain; it reads PIQYIMWKEL…VDALRFVHNQ (196 aa).

As to quaternary structure, monomer. As to expression, abundant in oocytes. At the neurula stage, low expression in dorsal embryo region including neural folds and somites.

Its subcellular location is the nucleus. In terms of biological role, transcription factor that determines dorsal-ventral body axis. The protein is Nuclear factor 7, ovary of Xenopus laevis (African clawed frog).